The following is a 490-amino-acid chain: Protein twist (490 aa).

Disordered stretches follow at residues 48 to 74, 98 to 167, and 330 to 359; these read QLQHQQQHLHSHQHHQQHQQQQQQHTQ, PSNE…TGGS, and LDGSDAGGKAFRKPRRRLKRKPSKTEETDE. Over residues 54-64 the composition is skewed to basic residues; the sequence is QHLHSHQHHQQ. Low complexity-rich tracts occupy residues 65–74 and 104–135; these read HQQQQQQHTQ and STSSNQSAQSTSLEMNNNNTSSNNTSSGNNPS. A compositionally biased stretch (basic residues) spans 339 to 351; sequence AFRKPRRRLKRKP. In terms of domain architecture, bHLH spans 362-413; the sequence is NQRVMANVRERQRTQSLNDAFKSLQQIIPTLPSDKLSKIQTLKLATRYIDFL.

Efficient DNA binding requires dimerization with another bHLH protein. Homodimer.

Its subcellular location is the nucleus. Involved in the establishment and dorsoventral patterning of germ layers in the embryo. The chain is Protein twist from Drosophila erecta (Fruit fly).